The following is a 642-amino-acid chain: Threonine--tRNA ligase (642 aa).

The 61-residue stretch at 1–61 folds into the TGS domain; that stretch reads MPVITLPDGS…ETDAELSIIT (61 aa). A catalytic region spans residues 243–534; it reads DHRKIGKQLD…LIEEYAGRFP (292 aa). Positions 334, 385, and 511 each coordinate Zn(2+).

The protein belongs to the class-II aminoacyl-tRNA synthetase family. As to quaternary structure, homodimer. It depends on Zn(2+) as a cofactor.

The protein localises to the cytoplasm. It carries out the reaction tRNA(Thr) + L-threonine + ATP = L-threonyl-tRNA(Thr) + AMP + diphosphate + H(+). Its function is as follows. Catalyzes the attachment of threonine to tRNA(Thr) in a two-step reaction: L-threonine is first activated by ATP to form Thr-AMP and then transferred to the acceptor end of tRNA(Thr). Also edits incorrectly charged L-seryl-tRNA(Thr). The chain is Threonine--tRNA ligase from Shewanella oneidensis (strain ATCC 700550 / JCM 31522 / CIP 106686 / LMG 19005 / NCIMB 14063 / MR-1).